The primary structure comprises 193 residues: NADH-quinone oxidoreductase subunit B (193 aa).

Polar residues predominate over residues 1 to 11 (MGLTGTNTTLV). Positions 1–23 (MGLTGTNTTLVAPQPKGILDPRT) are disordered. Positions 72, 73, 137, and 167 each coordinate [4Fe-4S] cluster.

The protein belongs to the complex I 20 kDa subunit family. In terms of assembly, NDH-1 is composed of 14 different subunits. Subunits NuoB, C, D, E, F, and G constitute the peripheral sector of the complex. Requires [4Fe-4S] cluster as cofactor.

It localises to the cell inner membrane. It carries out the reaction a quinone + NADH + 5 H(+)(in) = a quinol + NAD(+) + 4 H(+)(out). NDH-1 shuttles electrons from NADH, via FMN and iron-sulfur (Fe-S) centers, to quinones in the respiratory chain. Couples the redox reaction to proton translocation (for every two electrons transferred, four hydrogen ions are translocated across the cytoplasmic membrane), and thus conserves the redox energy in a proton gradient. The sequence is that of NADH-quinone oxidoreductase subunit B from Brucella canis (strain ATCC 23365 / NCTC 10854 / RM-666).